The primary structure comprises 701 residues: C6 finger domain transcription factor nscR (701 aa).

A DNA-binding region (zn(2)-C6 fungal-type) is located at residues 17-43 (CELCRERKVKCDKLDPCTNCSSAGVIC).

Its subcellular location is the nucleus. Its function is as follows. Transcription factor that specifically regulates the neosartoricin B biosynthesis gene cluster. The chain is C6 finger domain transcription factor nscR from Arthroderma benhamiae (strain ATCC MYA-4681 / CBS 112371) (Trichophyton mentagrophytes).